The sequence spans 1157 residues: Myosin tail region-interacting protein MTI1 (1157 aa).

In terms of domain architecture, SH3 spans 5-69; it reads EVPFKVVAQF…PKSFVAVQGS (65 aa). 2 disordered regions span residues 68–116 and 135–156; these read GSEV…GPVP and TAVS…KVPM. Over residues 77–89 the composition is skewed to polar residues; the sequence is SSPNTGSTEQRTI. The span at 93–110 shows a compositional bias: basic and acidic residues; that stretch reads VEQKDLPEPISPETKKET. Phosphoserine is present on Ser-103. Over residues 138 to 149 the composition is skewed to polar residues; it reads SAQVQHDSSSGN. Phosphoserine is present on residues Ser-158 and Ser-166. Disordered regions lie at residues 231-256 and 284-888; these read PEPI…KDLP and KKAK…PKVA. 2 coiled-coil regions span residues 234–301 and 356–430; these read INRA…NKNE and EKEQ…GASR. 3 stretches are compositionally biased toward basic and acidic residues: residues 242–256, 284–296, and 312–383; these read GRIE…KDLP, KKAK…ERSA, and NEKT…RGEN. Positions 398–411 are enriched in acidic residues; the sequence is EGDNDEEKEEEDSE. Basic and acidic residues-rich tracts occupy residues 412 to 423 and 506 to 524; these read ENRRAALRERMA and KTLD…EHGT. The span at 544–558 shows a compositional bias: acidic residues; that stretch reads DSDEDTDDHEFEDAN. Ser-565 bears the Phosphoserine mark. Over residues 574–585 the composition is skewed to low complexity; the sequence is GNNESENVNSGE. The span at 597 to 606 shows a compositional bias: basic and acidic residues; sequence RTAEVSHDIE. Residues 607–641 are compositionally biased toward polar residues; that stretch reads NSSQNTTGNVLPVSSPQTRVARNGSINSLTKSISG. Residues Ser-621, Ser-631, and Ser-634 each carry the phosphoserine modification. Phosphothreonine is present on Thr-636. Residues Ser-638 and Ser-647 each carry the phosphoserine modification. A compositionally biased stretch (basic and acidic residues) spans 642–653; it reads ENRRKSINEYHD. Residues 654–668 show a composition bias toward polar residues; the sequence is TVSTNSSALTETAQD. 2 stretches are compositionally biased toward pro residues: residues 691-738 and 747-765; these read PHPV…PVSS and SIPP…PAPL. Over residues 769–778 the composition is skewed to basic and acidic residues; it reads KHNEVEEHVK. A compositionally biased stretch (pro residues) spans 795–808; the sequence is NTAPPLPRAPPVPP. A compositionally biased stretch (polar residues) spans 832 to 853; the sequence is QNVTASTPSMMSTQQRVPTSVL. Phosphothreonine is present on Thr-850. Phosphoserine is present on Ser-889. A phosphothreonine mark is found at Thr-894 and Thr-895. Residue Lys-1012 forms a Glycyl lysine isopeptide (Lys-Gly) (interchain with G-Cter in ubiquitin) linkage.

As to quaternary structure, binds to the SH3 domains of the type I myosins MYO3 and MYO5.

It is found in the cytoplasm. It localises to the cytoskeleton. Its subcellular location is the actin patch. Functionally, involved in the regulation of actin cytoskeleton. The chain is Myosin tail region-interacting protein MTI1 (BBC1) from Saccharomyces cerevisiae (strain ATCC 204508 / S288c) (Baker's yeast).